A 1362-amino-acid chain; its full sequence is DNA-directed RNA polymerase subunit beta (1362 aa).

Belongs to the RNA polymerase beta chain family. In terms of assembly, the RNAP catalytic core consists of 2 alpha, 1 beta, 1 beta' and 1 omega subunit. When a sigma factor is associated with the core the holoenzyme is formed, which can initiate transcription.

The enzyme catalyses RNA(n) + a ribonucleoside 5'-triphosphate = RNA(n+1) + diphosphate. In terms of biological role, DNA-dependent RNA polymerase catalyzes the transcription of DNA into RNA using the four ribonucleoside triphosphates as substrates. This chain is DNA-directed RNA polymerase subunit beta, found in Acinetobacter baylyi (strain ATCC 33305 / BD413 / ADP1).